Here is a 223-residue protein sequence, read N- to C-terminus: UPF0441 protein YgiB (223 aa).

Over residues 178–195 (TVPKTAMAPKPATTTTVT) the composition is skewed to low complexity. Residues 178–223 (TVPKTAMAPKPATTTTVTRGGFGESVAKQSTMQRSATGTSSRSMGG) are disordered. Residues 204 to 223 (AKQSTMQRSATGTSSRSMGG) are compositionally biased toward polar residues.

The protein belongs to the UPF0441 family.

The chain is UPF0441 protein YgiB from Shigella dysenteriae serotype 1 (strain Sd197).